Here is a 65-residue protein sequence, read N- to C-terminus: Large ribosomal subunit protein uL29 (65 aa).

The protein belongs to the universal ribosomal protein uL29 family.

The protein is Large ribosomal subunit protein uL29 of Desulforamulus reducens (strain ATCC BAA-1160 / DSM 100696 / MI-1) (Desulfotomaculum reducens).